Consider the following 1052-residue polypeptide: Multidrug resistance protein MdtB (1052 aa).

The next 11 membrane-spanning stretches (helical) occupy residues 15-37 (LFILRPVATTLFMIAILLAGIIG), 345-362 (FELLLAIALVVMVIYLFL), 367-389 (ATIIPSIAVPLSLVGTFAAMYFL), 396-418 (LTLMALTIATGFVVDDAIVVIEN), 438-460 (GEIGFTIISLTFSLIAVLIPLLF), 472-494 (FAVTLAVAILISAVVSLTLTPMM), 535-557 (HPWLTLSVAFSTLVLTVILYLLI), 867-889 (LWLIIAAIVAMYIVLGVLYESFI), 909-931 (LMLTGNELDVIAIIGIILLIGIV), 968-990 (ILMTTLAALFGALPLMLSTGVGA), and 1000-1022 (MVGGLIVSQVLTLFTTPVIYLLF). The interval 1032 to 1052 (KNRHRDEDIDSSELLNGQEPQ) is disordered.

This sequence belongs to the resistance-nodulation-cell division (RND) (TC 2.A.6) family. MdtB subfamily. Part of a tripartite efflux system composed of MdtA, MdtB and MdtC. MdtB forms a heteromultimer with MdtC.

It is found in the cell inner membrane. This is Multidrug resistance protein MdtB from Yersinia pseudotuberculosis serotype I (strain IP32953).